Here is a 22-residue protein sequence, read N- to C-terminus: Caerin-3.4 (22 aa).

A Lysine amide modification is found at lysine 22.

In terms of tissue distribution, expressed by the skin parotoid and/or rostral glands.

Its subcellular location is the secreted. Functionally, antibacterial peptide, that adopts an alpha helical conformation which can disrupt bacterial membranes. Each caerin displays a different antimicrobial specificity. The chain is Caerin-3.4 from Ranoidea caerulea (Green tree frog).